Reading from the N-terminus, the 197-residue chain is NADH-quinone oxidoreductase subunit C (197 aa).

The protein belongs to the complex I 30 kDa subunit family. As to quaternary structure, NDH-1 is composed of 14 different subunits. Subunits NuoB, C, D, E, F, and G constitute the peripheral sector of the complex.

It localises to the cell inner membrane. The enzyme catalyses a quinone + NADH + 5 H(+)(in) = a quinol + NAD(+) + 4 H(+)(out). Its function is as follows. NDH-1 shuttles electrons from NADH, via FMN and iron-sulfur (Fe-S) centers, to quinones in the respiratory chain. The immediate electron acceptor for the enzyme in this species is believed to be ubiquinone. Couples the redox reaction to proton translocation (for every two electrons transferred, four hydrogen ions are translocated across the cytoplasmic membrane), and thus conserves the redox energy in a proton gradient. The chain is NADH-quinone oxidoreductase subunit C from Neisseria meningitidis serogroup C (strain 053442).